The following is a 202-amino-acid chain: N-acetyltransferase 9-like protein (202 aa).

Positions 34–184 (EEIRRLTGSE…FTFELPKNRL (151 aa)) constitute an N-acetyltransferase domain.

This sequence belongs to the acetyltransferase family. GNAT subfamily.

The polypeptide is N-acetyltransferase 9-like protein (Caenorhabditis elegans).